The primary structure comprises 106 residues: Large ribosomal subunit protein bL21 (106 aa).

This sequence belongs to the bacterial ribosomal protein bL21 family. As to quaternary structure, part of the 50S ribosomal subunit. Contacts protein L20.

Functionally, this protein binds to 23S rRNA in the presence of protein L20. The sequence is that of Large ribosomal subunit protein bL21 from Chlamydia caviae (strain ATCC VR-813 / DSM 19441 / 03DC25 / GPIC) (Chlamydophila caviae).